Reading from the N-terminus, the 412-residue chain is B3 domain-containing protein Os02g0683500 (412 aa).

Residues 1–87 (MEFTTSSRFS…GGGGGGGGEA (87 aa)) form a disordered region. Low complexity predominate over residues 30–65 (TATAEAAPAPTSSSSSPAHHAASASASASASGSSTP). Gly residues predominate over residues 73–86 (GASGSGGGGGGGGE). The segment at residues 96 to 200 (FDKVVTPSDV…RHRLFIDWKR (105 aa)) is a DNA-binding region (TF-B3). The segment at 374–412 (RLLELPPHHHHGAESSAASSPSSSSSSKRDAHSALDLDL) is disordered. The segment covering 387–399 (ESSAASSPSSSSS) has biased composition (low complexity). The span at 400 to 412 (SKRDAHSALDLDL) shows a compositional bias: basic and acidic residues.

Its subcellular location is the nucleus. This Oryza sativa subsp. japonica (Rice) protein is B3 domain-containing protein Os02g0683500.